A 302-amino-acid polypeptide reads, in one-letter code: HTH-type transcriptional regulator AbgR (302 aa).

The HTH lysR-type domain occupies 5 to 62 (VKIHQIRAFVEVARQGSIRGASRMLNMSQPALSKSIQELEEGLAAQLFFRRSKGVTLT). A DNA-binding region (H-T-H motif) is located at residues 22-41 (IRGASRMLNMSQPALSKSIQ).

Belongs to the LysR transcriptional regulatory family.

In terms of biological role, could be the regulator of the abg operon. The polypeptide is HTH-type transcriptional regulator AbgR (abgR) (Escherichia coli (strain K12)).